The following is a 232-amino-acid chain: Phosphatidylserine decarboxylase proenzyme (232 aa).

Serine 190 (schiff-base intermediate with substrate; via pyruvic acid) is an active-site residue. Serine 190 bears the Pyruvic acid (Ser); by autocatalysis mark.

This sequence belongs to the phosphatidylserine decarboxylase family. PSD-A subfamily. In terms of assembly, heterodimer of a large membrane-associated beta subunit and a small pyruvoyl-containing alpha subunit. The cofactor is pyruvate. In terms of processing, is synthesized initially as an inactive proenzyme. Formation of the active enzyme involves a self-maturation process in which the active site pyruvoyl group is generated from an internal serine residue via an autocatalytic post-translational modification. Two non-identical subunits are generated from the proenzyme in this reaction, and the pyruvate is formed at the N-terminus of the alpha chain, which is derived from the carboxyl end of the proenzyme. The post-translation cleavage follows an unusual pathway, termed non-hydrolytic serinolysis, in which the side chain hydroxyl group of the serine supplies its oxygen atom to form the C-terminus of the beta chain, while the remainder of the serine residue undergoes an oxidative deamination to produce ammonia and the pyruvoyl prosthetic group on the alpha chain.

The protein localises to the cell membrane. It catalyses the reaction a 1,2-diacyl-sn-glycero-3-phospho-L-serine + H(+) = a 1,2-diacyl-sn-glycero-3-phosphoethanolamine + CO2. Its pathway is phospholipid metabolism; phosphatidylethanolamine biosynthesis; phosphatidylethanolamine from CDP-diacylglycerol: step 2/2. Its function is as follows. Catalyzes the formation of phosphatidylethanolamine (PtdEtn) from phosphatidylserine (PtdSer). The chain is Phosphatidylserine decarboxylase proenzyme from Beijerinckia indica subsp. indica (strain ATCC 9039 / DSM 1715 / NCIMB 8712).